The following is an 89-amino-acid chain: Small ribosomal subunit protein uS15 (89 aa).

This sequence belongs to the universal ribosomal protein uS15 family. Part of the 30S ribosomal subunit. Forms a bridge to the 50S subunit in the 70S ribosome, contacting the 23S rRNA.

One of the primary rRNA binding proteins, it binds directly to 16S rRNA where it helps nucleate assembly of the platform of the 30S subunit by binding and bridging several RNA helices of the 16S rRNA. In terms of biological role, forms an intersubunit bridge (bridge B4) with the 23S rRNA of the 50S subunit in the ribosome. This Brucella abortus (strain S19) protein is Small ribosomal subunit protein uS15.